The chain runs to 466 residues: MDQKLLTDFRSELLDSRFGAKAISTIAESKRFPLHEMRDDVAFQIINDELYLDGNARQNLATFCQTWDDENVHKLMDLSINKNWIDKEEYPQSAAIDLRCVNMVADLWHAPAPKNGQAVGTNTIGSSEACMLGGMAMKWRWRKRMEAAGKPTDKPNLVCGPVQICWHKFARYWDVELREIPMRPGQLFMDPKRMIEACDENTIGVVPTFGVTYTGNYEFPQPLHDALDKFQADTGIDIDMHIDAASGGFLAPFVAPDIVWDFRLPRVKSISASGHKFGLAPLGCGWVIWRDEEALPQELVFNVDYLGGQIGTFAINFSRPAGQVIAQYYEFLRLGREGYTKVQNASYQVAAYLADEIAKQGPYEFICTGRPDEGIPAVCFKLKDGEDPGYTLYDLSERLRLRGWQVPAFTLGGEATDIVVMRIMCRRGFEMDFAELLLEDYKASLKYLSDHPKLQGIAQQNSFKHT.

Positions 62 and 83 each coordinate substrate. Residues 126–127 (SS), T212, and H275 contribute to the pyridoxal 5'-phosphate site. Residue K276 is modified to N6-(pyridoxal phosphate)lysine.

This sequence belongs to the group II decarboxylase family. Homohexamer. Pyridoxal 5'-phosphate serves as cofactor.

It catalyses the reaction L-glutamate + H(+) = 4-aminobutanoate + CO2. Converts glutamate to gamma-aminobutyrate (GABA), consuming one intracellular proton in the reaction. The gad system helps to maintain a near-neutral intracellular pH when cells are exposed to extremely acidic conditions. The ability to survive transit through the acidic conditions of the stomach is essential for successful colonization of the mammalian host by commensal and pathogenic bacteria. In Shigella flexneri, this protein is Glutamate decarboxylase alpha (gadA).